We begin with the raw amino-acid sequence, 88 residues long: Small ribosomal subunit protein bS20 (88 aa).

The segment at methionine 1–methionine 27 is disordered.

This sequence belongs to the bacterial ribosomal protein bS20 family.

In terms of biological role, binds directly to 16S ribosomal RNA. The polypeptide is Small ribosomal subunit protein bS20 (Shewanella denitrificans (strain OS217 / ATCC BAA-1090 / DSM 15013)).